The primary structure comprises 342 residues: Ribosomal RNA small subunit methyltransferase C (342 aa).

This sequence belongs to the methyltransferase superfamily. RsmC family. In terms of assembly, monomer.

The protein resides in the cytoplasm. The catalysed reaction is guanosine(1207) in 16S rRNA + S-adenosyl-L-methionine = N(2)-methylguanosine(1207) in 16S rRNA + S-adenosyl-L-homocysteine + H(+). Functionally, specifically methylates the guanine in position 1207 of 16S rRNA in the 30S particle. The chain is Ribosomal RNA small subunit methyltransferase C from Erwinia tasmaniensis (strain DSM 17950 / CFBP 7177 / CIP 109463 / NCPPB 4357 / Et1/99).